Here is a 380-residue protein sequence, read N- to C-terminus: Gonadotropin-releasing hormone II receptor (380 aa).

The Extracellular segment spans residues 1 to 40 (MSAVNGTPWGSSAREEVWAGSGVEVEGSELPTFSTAAKVR). The helical transmembrane segment at 41 to 60 (VGVTIVLFVSSAGGNLAVLW) threads the bilayer. The Cytoplasmic portion of the chain corresponds to 61 to 76 (SVTRPQPSQLRPSPVR). The helical transmembrane segment at 77–96 (RLFAHLAAADLLVTFVVMPL) threads the bilayer. Topologically, residues 97–114 (DATWNITVQWLAGDIACR) are extracellular. N101 carries N-linked (GlcNAc...) asparagine glycosylation. C113 and C188 form a disulfide bridge. The helical transmembrane segment at 115–136 (TLMFLKLMAMYAAAFLPVVIGL) threads the bilayer. Residues 137–160 (DRQAAVLNPLGSRSGVRKLLGAAW) lie on the Cytoplasmic side of the membrane. A helical transmembrane segment spans residues 161-178 (GLSFLLALPQLFLFHTVH). The Extracellular segment spans residues 179–204 (RAGPVPFTQCATKGSFKARWQETTYN). The helical transmembrane segment at 205 to 224 (LFTFCCLFLLPLTAMAICYS) threads the bilayer. At 225–278 (RIVLGVSSPRTRKGSHAPAGEFALRRSFDNRPRVRLRALRLALLVLLTFILCWT) the chain is on the cytoplasmic side. Residues 279–297 (PYYLLGLWYWFSPSMLSEV) traverse the membrane as a helical segment. At 298-303 (PPSLSH) the chain is on the extracellular side. Residues 304-323 (ILFLFGLLNAPLDPLLYGAF) traverse the membrane as a helical segment. Topologically, residues 324 to 380 (TLGCRRGHQELSMDSSREEGSRRMFQQDIQALRQTEVQKTVTSRKAGETKDIPITSI) are cytoplasmic.

It belongs to the G-protein coupled receptor 1 family. In terms of processing, phosphorylated on the C-terminal cytoplasmic tail.

It is found in the cell membrane. In terms of biological role, receptor for gonadotropin releasing hormone II (GnRH II). This receptor mediates its action by association with G proteins that activate a phosphatidylinositol-calcium second messenger system. This Callithrix jacchus (White-tufted-ear marmoset) protein is Gonadotropin-releasing hormone II receptor (GNRHR2).